Here is a 100-residue protein sequence, read N- to C-terminus: Large ribosomal subunit protein uL23 (100 aa).

It belongs to the universal ribosomal protein uL23 family. As to quaternary structure, part of the 50S ribosomal subunit. Contacts protein L29, and trigger factor when it is bound to the ribosome.

Its function is as follows. One of the early assembly proteins it binds 23S rRNA. One of the proteins that surrounds the polypeptide exit tunnel on the outside of the ribosome. Forms the main docking site for trigger factor binding to the ribosome. In Novosphingobium aromaticivorans (strain ATCC 700278 / DSM 12444 / CCUG 56034 / CIP 105152 / NBRC 16084 / F199), this protein is Large ribosomal subunit protein uL23.